Here is a 901-residue protein sequence, read N- to C-terminus: Protein translocase subunit SecA (901 aa).

ATP-binding positions include glutamine 87, 105 to 109 (GEGKT), and aspartate 512. Zn(2+)-binding residues include cysteine 885, cysteine 887, cysteine 896, and histidine 897.

It belongs to the SecA family. As to quaternary structure, monomer and homodimer. Part of the essential Sec protein translocation apparatus which comprises SecA, SecYEG and auxiliary proteins SecDF-YajC and YidC. The cofactor is Zn(2+).

It localises to the cell inner membrane. Its subcellular location is the cytoplasm. It carries out the reaction ATP + H2O + cellular proteinSide 1 = ADP + phosphate + cellular proteinSide 2.. In terms of biological role, part of the Sec protein translocase complex. Interacts with the SecYEG preprotein conducting channel. Has a central role in coupling the hydrolysis of ATP to the transfer of proteins into and across the cell membrane, serving both as a receptor for the preprotein-SecB complex and as an ATP-driven molecular motor driving the stepwise translocation of polypeptide chains across the membrane. This is Protein translocase subunit SecA from Salmonella paratyphi A (strain ATCC 9150 / SARB42).